Here is a 270-residue protein sequence, read N- to C-terminus: Formamidopyrimidine-DNA glycosylase (270 aa).

P2 acts as the Schiff-base intermediate with DNA in catalysis. E3 serves as the catalytic Proton donor. K58 functions as the Proton donor; for beta-elimination activity in the catalytic mechanism. 3 residues coordinate DNA: H91, R110, and R151. Residues 236–270 (FVYGRGGEFCKVCGSTLREIRLGQRASVYCPRCQR) form an FPG-type zinc finger. R260 (proton donor; for delta-elimination activity) is an active-site residue.

It belongs to the FPG family. Monomer. The cofactor is Zn(2+).

The catalysed reaction is Hydrolysis of DNA containing ring-opened 7-methylguanine residues, releasing 2,6-diamino-4-hydroxy-5-(N-methyl)formamidopyrimidine.. It catalyses the reaction 2'-deoxyribonucleotide-(2'-deoxyribose 5'-phosphate)-2'-deoxyribonucleotide-DNA = a 3'-end 2'-deoxyribonucleotide-(2,3-dehydro-2,3-deoxyribose 5'-phosphate)-DNA + a 5'-end 5'-phospho-2'-deoxyribonucleoside-DNA + H(+). Functionally, involved in base excision repair of DNA damaged by oxidation or by mutagenic agents. Acts as a DNA glycosylase that recognizes and removes damaged bases. Has a preference for oxidized purines, such as 7,8-dihydro-8-oxoguanine (8-oxoG). Has AP (apurinic/apyrimidinic) lyase activity and introduces nicks in the DNA strand. Cleaves the DNA backbone by beta-delta elimination to generate a single-strand break at the site of the removed base with both 3'- and 5'-phosphates. The chain is Formamidopyrimidine-DNA glycosylase from Pseudomonas aeruginosa (strain LESB58).